Reading from the N-terminus, the 346-residue chain is uncharacterized protein (346 aa).

Residues 10–109 (WDFIMTDPSS…SNSNGNNSPV (100 aa)) are disordered. Over residues 26–44 (KGSSKNGSPKTSSPKSGSP) the composition is skewed to low complexity. The span at 56-67 (NQQLLQNDSINL) shows a compositional bias: polar residues. Over residues 94–109 (KSSVVPSNSNGNNSPV) the composition is skewed to low complexity.

This is an uncharacterized protein from Dictyostelium discoideum (Social amoeba).